We begin with the raw amino-acid sequence, 200 residues long: Lipopolysaccharide core heptose(II)-phosphate phosphatase (200 aa).

The signal sequence occupies residues 1-25 (MLAFCRSSLKSKKYFIILLALAAIA).

The protein belongs to the phosphoglycerate mutase family. Ais subfamily.

It localises to the periplasm. It participates in bacterial outer membrane biogenesis; lipopolysaccharide metabolism. In terms of biological role, catalyzes the dephosphorylation of heptose(II) of the outer membrane lipopolysaccharide core. The polypeptide is Lipopolysaccharide core heptose(II)-phosphate phosphatase (Escherichia coli O7:K1 (strain IAI39 / ExPEC)).